Here is a 572-residue protein sequence, read N- to C-terminus: Phosphoenolpyruvate-protein phosphotransferase (572 aa).

His191 functions as the Tele-phosphohistidine intermediate in the catalytic mechanism. Phosphoenolpyruvate-binding residues include Arg298 and Arg334. The Mg(2+) site is built by Glu433 and Asp457. Phosphoenolpyruvate-binding positions include 456 to 457 (ND) and Arg467. The active-site Proton donor is the Cys504.

The protein belongs to the PEP-utilizing enzyme family. In terms of assembly, homodimer. Requires Mg(2+) as cofactor.

Its subcellular location is the cytoplasm. It catalyses the reaction L-histidyl-[protein] + phosphoenolpyruvate = N(pros)-phospho-L-histidyl-[protein] + pyruvate. Functionally, general (non sugar-specific) component of the phosphoenolpyruvate-dependent sugar phosphotransferase system (sugar PTS). This major carbohydrate active-transport system catalyzes the phosphorylation of incoming sugar substrates concomitantly with their translocation across the cell membrane. Enzyme I transfers the phosphoryl group from phosphoenolpyruvate (PEP) to the phosphoryl carrier protein (HPr). The polypeptide is Phosphoenolpyruvate-protein phosphotransferase (ptsI) (Staphylococcus epidermidis (strain ATCC 35984 / DSM 28319 / BCRC 17069 / CCUG 31568 / BM 3577 / RP62A)).